Here is a 44-residue protein sequence, read N- to C-terminus: Photosystem I reaction center subunit IX (44 aa).

A helical membrane pass occupies residues 7–27 (YLSVAPVLSTLWFGALAGLLI).

It belongs to the PsaJ family.

Its subcellular location is the plastid. It localises to the chloroplast thylakoid membrane. Its function is as follows. May help in the organization of the PsaE and PsaF subunits. This is Photosystem I reaction center subunit IX from Oryza nivara (Indian wild rice).